Reading from the N-terminus, the 105-residue chain is Putative thioredoxin-5 (105 aa).

The region spanning 1–104 (MYKEPKNESE…VALENMVKKL (104 aa)) is the Thioredoxin domain. Catalysis depends on nucleophile residues Cys30 and Cys33. A disulfide bridge connects residues Cys30 and Cys33.

This sequence belongs to the thioredoxin family.

Its function is as follows. Participates in various redox reactions through the reversible oxidation of its active center dithiol to a disulfide and catalyzes dithiol-disulfide exchange reactions. This chain is Putative thioredoxin-5 (trxE), found in Dictyostelium discoideum (Social amoeba).